A 361-amino-acid chain; its full sequence is uncharacterized protein (361 aa).

T12 carries the post-translational modification Phosphothreonine.

It localises to the cytoplasm. The protein resides in the nucleus. This is an uncharacterized protein from Schizosaccharomyces pombe (strain 972 / ATCC 24843) (Fission yeast).